A 290-amino-acid chain; its full sequence is Syntaxin (290 aa).

Residues 1 to 22 form a disordered region; sequence MTKDRLAALKAAQSDDDDNDDV. The Cytoplasmic portion of the chain corresponds to 1–267; the sequence is MTKDRLAALK…KYQSKARRKK (267 aa). A coiled-coil region spans residues 32-114; sequence MEEFFEQVDE…EEHTNKSSAD (83 aa). The t-SNARE coiled-coil homology domain occupies 194 to 256; the sequence is LADIEARHND…ETAKMDTKKA (63 aa). Residues 268–288 traverse the membrane as a helical; Anchor for type IV membrane protein segment; the sequence is IMILVCLAILIIILVGVIGGT. At 289 to 290 the chain is on the extracellular side; that stretch reads LG.

It belongs to the syntaxin family.

It localises to the membrane. Functionally, potentially involved in docking of synaptic vesicles at presynaptic active zones. In Aplysia californica (California sea hare), this protein is Syntaxin.